Consider the following 117-residue polypeptide: Non-specific lipid-transfer protein 3 (117 aa).

The N-terminal stretch at 1-25 (MAGLVKLSCLVLACMIVAGPIATNA) is a signal peptide. Disulfide bonds link Cys-29/Cys-76, Cys-39/Cys-53, Cys-54/Cys-99, and Cys-74/Cys-113.

This sequence belongs to the plant LTP family.

Its function is as follows. Plant non-specific lipid-transfer proteins transfer phospholipids as well as galactolipids across membranes. May play a role in wax or cutin deposition in the cell walls of expanding epidermal cells and certain secretory tissues. This Brassica napus (Rape) protein is Non-specific lipid-transfer protein 3 (LTP3).